Reading from the N-terminus, the 476-residue chain is Protein Cep89 homolog (476 aa).

Disordered regions lie at residues 1 to 29 (MSTR…KKNR) and 172 to 193 (LGEG…APYP). A compositionally biased stretch (polar residues) spans 180 to 190 (GGSTKVSSSSA).

It is found in the cytoplasm. The protein resides in the cytosol. Its subcellular location is the mitochondrion intermembrane space. In terms of biological role, required for mitochondrial complex IV activity. May be involved in non-associative learning. This is Protein Cep89 homolog (Cep89) from Drosophila melanogaster (Fruit fly).